Here is a 321-residue protein sequence, read N- to C-terminus: Protein BIG GRAIN 1-like E (321 aa).

Residues 134 to 217 form a disordered region; that stretch reads AGSKKNKSKS…PPPYLNTPTK (84 aa). The segment covering 135 to 147 has biased composition (basic residues); that stretch reads GSKKNKSKSKSKT. Positions 172–206 are enriched in low complexity; sequence ISHFFSSSRSTSTTTTTTASSSSKSLISSSSSGFR.

Belongs to the BIG GRAIN 1 (BG1) plant protein family.

It is found in the cell membrane. Functionally, involved in auxin transport. Regulator of the auxin signaling pathway. This chain is Protein BIG GRAIN 1-like E, found in Arabidopsis thaliana (Mouse-ear cress).